A 316-amino-acid chain; its full sequence is Ribosomal RNA small subunit methyltransferase H (316 aa).

S-adenosyl-L-methionine-binding positions include 42–44 (GGH), Asp62, Phe86, Asp104, and Gln111.

Belongs to the methyltransferase superfamily. RsmH family.

It is found in the cytoplasm. It carries out the reaction cytidine(1402) in 16S rRNA + S-adenosyl-L-methionine = N(4)-methylcytidine(1402) in 16S rRNA + S-adenosyl-L-homocysteine + H(+). Specifically methylates the N4 position of cytidine in position 1402 (C1402) of 16S rRNA. This chain is Ribosomal RNA small subunit methyltransferase H, found in Polynucleobacter necessarius subsp. necessarius (strain STIR1).